Here is a 328-residue protein sequence, read N- to C-terminus: Galactinol synthase 10 (328 aa).

Residue lysine 106 is part of the active site. Mn(2+) contacts are provided by aspartate 122, aspartate 124, and histidine 248.

It belongs to the glycosyltransferase 8 family. Galactosyltransferase subfamily. A divalent metal cation is required as a cofactor.

It localises to the cytoplasm. The enzyme catalyses myo-inositol + UDP-alpha-D-galactose = alpha-D-galactosyl-(1-&gt;3)-1D-myo-inositol + UDP + H(+). In terms of biological role, galactinol synthase involved in the biosynthesis of raffinose family oligosaccharides (RFOs) that function as osmoprotectants. May promote plant stress tolerance. This chain is Galactinol synthase 10 (GOLS10), found in Arabidopsis thaliana (Mouse-ear cress).